Here is a 216-residue protein sequence, read N- to C-terminus: uncharacterized protein (216 aa).

The next 4 helical transmembrane spans lie at 5-27 (ISLI…IAFS), 98-120 (FLSF…VFLL), 125-147 (VLIW…TFTN), and 185-207 (GTLF…GILG).

Its subcellular location is the cell membrane. This is an uncharacterized protein from Aquifex aeolicus (strain VF5).